The chain runs to 209 residues: MNLAPIHDPSSSSTTTTSSSTPYGLTKDEFSTLDSIIRTHHTFPRSPNTCTSLIAHRVDAPAHAIWRFVRDFANPNKYKHFIKSCTIRVNGNGIKEIKVGTIREVSVVSGLPASTSVEILEVLDEEKRILSFRVLGGEHRLNNYRSVTSVNEFVVLEKDKKKRVYSVVLESYIVDIPQGNTEEDTRMFVDTVVKSNLQNLAVISTASPT.

The segment at 1–23 is disordered; sequence MNLAPIHDPSSSSTTTTSSSTPY. Low complexity predominate over residues 10 to 21; it reads SSSSTTTTSSST. An START-like region spans residues 43-205; it reads FPRSPNTCTS…NLQNLAVIST (163 aa). Abscisate-binding positions include lysine 79, 113 to 118, 140 to 146, and glutamate 170; these read ASTSVE and RLNNYRS. Residues 109–113 carry the Gate loop motif; that stretch reads SGLPA. Positions 139-141 match the Latch loop motif; that stretch reads HRL.

This sequence belongs to the PYR/PYL/RCAR abscisic acid intracellular receptor family. As to quaternary structure, homodimer and monomer. Binds ABA on one subunit only. ABA-binding favors monomer and trans-homodimer intermediate, and increases PP2C inhibitor activity. Binds both (-)-ABA and (+)-ABA. Binds to CARs protein in an ABA-independent manner, both at the plasma membrane and in the nucleus. Interacts with HAB1, ABI1 and ABI2, and possibly with other PP2Cs.

It is found in the cytoplasm. Its subcellular location is the nucleus. It localises to the cell membrane. Its function is as follows. Receptor for abscisic acid (ABA) required for ABA-mediated responses such as stomatal closure and germination inhibition. Inhibits the activity of group-A protein phosphatases type 2C (PP2Cs) when activated by ABA. Can be activated by both (-)-ABA and (+)-ABA. The protein is Abscisic acid receptor PYL3 (PYL3) of Arabidopsis thaliana (Mouse-ear cress).